Reading from the N-terminus, the 126-residue chain is Large ribosomal subunit protein bL19 (126 aa).

It belongs to the bacterial ribosomal protein bL19 family.

This protein is located at the 30S-50S ribosomal subunit interface and may play a role in the structure and function of the aminoacyl-tRNA binding site. The sequence is that of Large ribosomal subunit protein bL19 from Thiobacillus denitrificans (strain ATCC 25259 / T1).